Here is a 624-residue protein sequence, read N- to C-terminus: Sulfite reductase [ferredoxin] (624 aa).

A cross-link (3'-(S-cysteinyl)-tyrosine (Tyr-Cys)) is located at residues 52–137; the sequence is YQQDNRDNRV…ENLGSTISAC (86 aa). [4Fe-4S] cluster contacts are provided by Cys446, Cys452, Cys491, and Cys495. Position 495 (Cys495) interacts with siroheme.

It belongs to the nitrite and sulfite reductase 4Fe-4S domain family. In terms of assembly, monomer. It depends on siroheme as a cofactor. [4Fe-4S] cluster is required as a cofactor.

The enzyme catalyses hydrogen sulfide + 6 oxidized [2Fe-2S]-[ferredoxin] + 3 H2O = sulfite + 6 reduced [2Fe-2S]-[ferredoxin] + 7 H(+). Catalyzes the reduction of sulfite to sulfide, a step in the biosynthesis of sulfur-containing amino acids and cofactors. In Synechococcus elongatus (strain ATCC 33912 / PCC 7942 / FACHB-805) (Anacystis nidulans R2), this protein is Sulfite reductase [ferredoxin] (sir).